Consider the following 419-residue polypeptide: Transcription regulator lscL (419 aa).

A DNA-binding region (zn(2)-C6 fungal-type) is located at residues 12 to 35 (RIRKVKCDEKKPCCQKCIDTGRTC).

Its subcellular location is the nucleus. In terms of biological role, transcription factor that may coregulate the expression of the gene cluster that mediates the biosynthesis of the lipopeptide antibiotics leucinostatins that show extensive biological activities, including antimalarial, antiviral, antibacterial, antifungal, and antitumor activities, as well as phytotoxic. This Purpureocillium lilacinum (Paecilomyces lilacinus) protein is Transcription regulator lscL.